The primary structure comprises 393 residues: Actin-related protein 2 (393 aa).

ATP is bound by residues 158–160, 212–216, and 303–308; these read GDG, RQMKE, and GGTTMY.

Belongs to the actin family. ARP2 subfamily. Component of the Arp2/3 complex.

The protein resides in the cytoplasm. It is found in the cytoskeleton. Functions as ATP-binding component of the Arp2/3 complex which is involved in regulation of actin polymerization and together with an activating nucleation-promoting factor (NPF) mediates the formation of branched actin networks. Seems to contact the pointed end of the daughter actin filament. The chain is Actin-related protein 2 (arx-2) from Caenorhabditis briggsae.